The primary structure comprises 260 residues: Phosphatidylglycerol--prolipoprotein diacylglyceryl transferase (260 aa).

3 consecutive transmembrane segments (helical) span residues 16–36 (LEFR…YFIV), 55–75 (VIFS…ILFY), and 87–107 (LFAV…VILA). A 1,2-diacyl-sn-glycero-3-phospho-(1'-sn-glycerol) is bound at residue arginine 138. A run of 2 helical transmembrane segments spans residues 198 to 218 (GVVF…VEFF) and 232 to 252 (FSMG…MAVL).

The protein belongs to the Lgt family.

The protein localises to the cell inner membrane. It catalyses the reaction L-cysteinyl-[prolipoprotein] + a 1,2-diacyl-sn-glycero-3-phospho-(1'-sn-glycerol) = an S-1,2-diacyl-sn-glyceryl-L-cysteinyl-[prolipoprotein] + sn-glycerol 1-phosphate + H(+). The protein operates within protein modification; lipoprotein biosynthesis (diacylglyceryl transfer). In terms of biological role, catalyzes the transfer of the diacylglyceryl group from phosphatidylglycerol to the sulfhydryl group of the N-terminal cysteine of a prolipoprotein, the first step in the formation of mature lipoproteins. This is Phosphatidylglycerol--prolipoprotein diacylglyceryl transferase from Geobacter sulfurreducens (strain ATCC 51573 / DSM 12127 / PCA).